A 425-amino-acid polypeptide reads, in one-letter code: 5-methylthioadenosine/S-adenosylhomocysteine deaminase (425 aa).

The Zn(2+) site is built by H63 and H65. Residues E92 and H184 each coordinate substrate. A Zn(2+)-binding site is contributed by H211. Substrate is bound by residues E214 and D299. D299 provides a ligand contact to Zn(2+).

It belongs to the metallo-dependent hydrolases superfamily. MTA/SAH deaminase family. Zn(2+) is required as a cofactor.

The enzyme catalyses S-adenosyl-L-homocysteine + H2O + H(+) = S-inosyl-L-homocysteine + NH4(+). It carries out the reaction S-methyl-5'-thioadenosine + H2O + H(+) = S-methyl-5'-thioinosine + NH4(+). Functionally, catalyzes the deamination of 5-methylthioadenosine and S-adenosyl-L-homocysteine into 5-methylthioinosine and S-inosyl-L-homocysteine, respectively. Is also able to deaminate adenosine. The protein is 5-methylthioadenosine/S-adenosylhomocysteine deaminase of Pyrococcus abyssi (strain GE5 / Orsay).